The sequence spans 285 residues: Undecaprenyl-diphosphatase (285 aa).

7 helical membrane-spanning segments follow: residues 3 to 23, 41 to 61, 87 to 107, 109 to 129, 197 to 217, 226 to 246, and 260 to 280; these read ILLL…EFLP, GEIV…AVIW, LLIA…LIKE, LFHP…ILWV, TEFS…YSLI, GDLP…LVCI, and VFAW…WGGW.

This sequence belongs to the UppP family.

The protein localises to the cell inner membrane. The catalysed reaction is di-trans,octa-cis-undecaprenyl diphosphate + H2O = di-trans,octa-cis-undecaprenyl phosphate + phosphate + H(+). Its function is as follows. Catalyzes the dephosphorylation of undecaprenyl diphosphate (UPP). Confers resistance to bacitracin. The sequence is that of Undecaprenyl-diphosphatase from Methylibium petroleiphilum (strain ATCC BAA-1232 / LMG 22953 / PM1).